The following is an 858-amino-acid chain: Potassium transporter 7 (858 aa).

2 stretches are compositionally biased toward acidic residues: residues 1 to 16 and 38 to 53; these read MAEE…EEID and QDDD…DNDG. The interval 1-68 is disordered; that stretch reads MAEESSMEGS…LESDEDEIPE (68 aa). At 1–104 the chain is on the cytoplasmic side; sequence MAEESSMEGS…DYEDLTVGRK (104 aa). A helical transmembrane segment spans residues 105 to 125; that stretch reads VLLAFQTLGVVFGDVGTSPLY. At 126–147 the chain is on the extracellular side; sequence TFSVMFSKSPVQEKEDVIGALS. A helical membrane pass occupies residues 148–168; sequence LVLYTLLLVPLIKYVLVVLWA. Residues 169–232 lie on the Cytoplasmic side of the membrane; the sequence is NDDGEGGTFA…KLENSLILKK (64 aa). The helical transmembrane segment at 233–253 threads the bilayer; that stretch reads ILLVLVLAGTSMVIADGVVTP. At 254–269 the chain is on the extracellular side; sequence AMSVMSAVGGLKVGVD. The helical transmembrane segment at 270–290 threads the bilayer; the sequence is VVEQDQVVMISVAFLVILFSL. At 291-297 the chain is on the cytoplasmic side; it reads QKYGTSK. The helical transmembrane segment at 298 to 318 threads the bilayer; it reads MGLVVGPALLIWFCSLAGIGI. Topologically, residues 319–345 are extracellular; the sequence is YNLIKYDSSVYRAFNPVHIYYFFKRNS. A helical membrane pass occupies residues 346-366; it reads INAWYALGGCILCATGSEALF. Residues 367–380 lie on the Cytoplasmic side of the membrane; that stretch reads ADLCYFSVRSVQLT. A helical transmembrane segment spans residues 381 to 401; sequence FVCLVLPCLMLGYMGQAAYLM. The Extracellular portion of the chain corresponds to 402–413; sequence ENHADASQAFFS. Residues 414–434 traverse the membrane as a helical segment; sequence SVPGSAFWPVLFIANIAALIA. Topologically, residues 435–470 are cytoplasmic; sequence SRTMTTATFSCIKQSTALGCFPRLKIIHTSRKFMGQ. The chain crosses the membrane as a helical span at residues 471-491; the sequence is IYIPVLNWFLLAVCLVVVCSI. Topologically, residues 492-496 are extracellular; the sequence is SSIDE. The helical transmembrane segment at 497–517 threads the bilayer; sequence IGNAYGMAELGVMMTTTILVT. Position 518 (Leu518) is a topological domain, cytoplasmic. A helical transmembrane segment spans residues 519-539; that stretch reads IMLLIWQINIVIVIAFLVVFL. Over 540 to 552 the chain is Extracellular; the sequence is GVELVFFSSVIAS. Residues 553 to 573 traverse the membrane as a helical segment; the sequence is VGDGSWIILVFAVIMFGIMYI. Topologically, residues 574-858 are cytoplasmic; sequence WNYGSKLRYE…LMQVGMTYMV (285 aa). The tract at residues 707–731 is disordered; sequence QERSLESDGNDDSDSEEDFPGSRVV. The segment covering 714 to 725 has biased composition (acidic residues); the sequence is DGNDDSDSEEDF. 2 positions are modified to phosphoserine: Ser719 and Ser721.

Belongs to the HAK/KUP transporter (TC 2.A.72.3) family.

The protein localises to the cell membrane. In terms of biological role, probable potassium transporter. The sequence is that of Potassium transporter 7 (POT7) from Arabidopsis thaliana (Mouse-ear cress).